The primary structure comprises 861 residues: Piwi-like protein 1 (861 aa).

The segment covering 1–13 has biased composition (basic residues); it reads MTGRARARARGRA. A disordered region spans residues 1–64; the sequence is MTGRARARAR…TAGGTAKSQG (64 aa). Residue R14 is modified to Omega-N-methylarginine; by PRMT5; alternate. The residue at position 14 (R14) is a Symmetric dimethylarginine; by PRMT5; alternate. Positions 17–27 are enriched in polar residues; it reads ETAQLVGSTAS. At R49 the chain carries Omega-N-methylarginine; by PRMT5. R53 bears the Omega-N-methylarginine; alternate mark. Residue R53 is modified to Symmetric dimethylarginine; alternate. The D-box signature appears at 217–224; the sequence is RRLLKIMN. One can recognise a PAZ domain in the interval 278–391; it reads TVLDFMFNFY…LIPELCYLTG (114 aa). The segment at 316–318 is required for binding 2'-O-methylated 3'-end of piRNAs; the sequence is TYR. R370 carries the post-translational modification Omega-N-methylarginine; by PRMT5. The segment at 479-615 is MID region; it reads SKETRGAPLI…LQMNCKMGGE (137 aa). Residues 555–847 enclose the Piwi domain; it reads IVVCLLSSNR…LAFLVGQSIH (293 aa). Catalysis depends on residues D632, E670, D702, and H836.

Belongs to the argonaute family. Piwi subfamily. In terms of assembly, interacts (via Piwi domain) with DICER1, suggesting that it forms ribonucleoprotein RISC complexes; this interaction is regulated by HSP90AB1 activity. Interacts with MAEL, KIF17, PABPC1, PRMT5 and WDR77. Interacts (when methylated on arginine residues) with TDRD1, TDRKH/TDRD2, RNF17/TDRD4, TDRD6, TDRD7 and TDRD9. Interacts with CLOCK. Interacts with MOV10L1. Interacts with ANAPC10; interaction oly takes place following piRNA-binding. Interacts with RNF8; leading to sequester RNF8 in the cytoplasm. Interacts with TEX19. Requires Mg(2+) as cofactor. In terms of processing, arginine methylation by PRMT5 is required for the interaction with Tudor domain-containing protein (TDRD1, TDRKH/TDRD2, RNF17/TDRD4, TDRD6, TDRD7 and TDRD9) and subsequent localization to the meiotic nuage, also named P granule. Post-translationally, ubiquitinated by the anaphase promoting complex/cyclosome (APC/C) in late spermatids, leading to its degradation. Ubiquitination only takes place following piRNA-binding in adult testis. Ubiquitination and degradation in late spermatogenesis by APC/C is probably required to release RNF8 from the cytoplasm and promote histone to protamine exchange by RNF8. As to expression, expressed in spermatocytes and spermatids. Also detected in prostate cancer (at protein level). Detected in most fetal and adult tissues. Expressed in testes, specifically in germline cells; detected in spermatocytes and spermatids during spermatogenesis. Increased expression in testicular tumors originating from embryonic germ cells with retention of germ cells phenotype. No expression in testicular tumors of somatic origin, such as Sertoli cell and Leydig cell tumors. Overexpressed in gastric cancer cells. Isoform 3: Ubiquitously expressed, and specifically in CD34(+) hematopoietic progenitor cells but not in more differentiated cells.

The protein localises to the cytoplasm. Its function is as follows. Endoribonuclease that plays a central role in postnatal germ cells by repressing transposable elements and preventing their mobilization, which is essential for the germline integrity. Acts via the piRNA metabolic process, which mediates the repression of transposable elements during meiosis by forming complexes composed of piRNAs and Piwi proteins and governs the methylation and subsequent repression of transposons. Directly binds methylated piRNAs, a class of 24 to 30 nucleotide RNAs that are generated by a Dicer-independent mechanism and are primarily derived from transposons and other repeated sequence elements. Strongly prefers a uridine in the first position of their guide (g1U preference, also named 1U-bias). Not involved in the piRNA amplification loop, also named ping-pong amplification cycle. Acts as an endoribonuclease that cleaves transposon messenger RNAs. Besides their function in transposable elements repression, piRNAs are probably involved in other processes during meiosis such as translation regulation. Probable component of some RISC complex, which mediates RNA cleavage and translational silencing. Also plays a role in the formation of chromatoid bodies and is required for some miRNAs stability. Required to sequester RNF8 in the cytoplasm until late spermatogenesis; RNF8 being released upon ubiquitination and degradation of PIWIL1. In terms of biological role, may be a negative developmental regulator. The sequence is that of Piwi-like protein 1 (PIWIL1) from Homo sapiens (Human).